The sequence spans 595 residues: Cyclin-dependent kinase-like 3 (595 aa).

The 283-residue stretch at 4 to 286 (YETLGKVGEG…STDLLRHDYF (283 aa)) folds into the Protein kinase domain. ATP contacts are provided by residues 10–18 (VGEGSYGTV) and K33. Residues 45–51 (KIATREI) carry the [NKR]KIAxRE motif. The active-site Proton acceptor is the D125. Position 158 is a phosphothreonine (T158). Y160 bears the Phosphotyrosine mark. 3 disordered regions span residues 362–427 (VIKA…PHAG), 448–513 (SSNL…NKRK), and 551–586 (RESKKTDSSKIPTLLSMDPNQEKQEGGDGDCEGKNL). A compositionally biased stretch (basic and acidic residues) spans 368 to 386 (GKGDVPDQKKPEYEGDHRQ). Polar residues predominate over residues 387–397 (QGTADDTQPSS). The span at 448 to 457 (SSNLSHPNSR) shows a compositional bias: low complexity. 2 stretches are compositionally biased toward polar residues: residues 468–491 (SSQTIGQTLSNSRQEDTGPTQVQT) and 499–509 (RTGQNDQISSG). Over residues 570–585 (NQEKQEGGDGDCEGKN) the composition is skewed to basic and acidic residues.

Belongs to the protein kinase superfamily. CMGC Ser/Thr protein kinase family. CDC2/CDKX subfamily.

It localises to the cytoplasm. It catalyses the reaction L-seryl-[protein] + ATP = O-phospho-L-seryl-[protein] + ADP + H(+). It carries out the reaction L-threonyl-[protein] + ATP = O-phospho-L-threonyl-[protein] + ADP + H(+). The chain is Cyclin-dependent kinase-like 3 from Mus musculus (Mouse).